The chain runs to 326 residues: Deoxyuridine 5'-triphosphate nucleotidohydrolase (326 aa).

Substrate is bound by residues 218–220 and 321–322; these read RSS and FG.

Belongs to the dUTPase family. Mg(2+) is required as a cofactor.

The catalysed reaction is dUTP + H2O = dUMP + diphosphate + H(+). In terms of biological role, involved in nucleotide metabolism: produces dUMP, the immediate precursor of thymidine nucleotides and decreases the intracellular concentration of dUTP to avoid uracil incorporation into viral DNA. The polypeptide is Deoxyuridine 5'-triphosphate nucleotidohydrolase (Equus caballus (Horse)).